A 259-amino-acid chain; its full sequence is 1,2-dihydroxy-1,2-dihydronaphthalene dehydrogenase (259 aa).

NAD(+) is bound by residues 8–35 (AITG…SALV) and D58. S140 is a binding site for substrate. The active-site Proton acceptor is the Y153. Position 157 (K157) interacts with NAD(+).

This sequence belongs to the short-chain dehydrogenases/reductases (SDR) family.

The enzyme catalyses (1R,2S)-1,2-dihydronaphthalene-1,2-diol + NAD(+) = naphthalene-1,2-diol + NADH + H(+). The protein operates within aromatic compound metabolism; naphthalene degradation. Functionally, catalyzes the oxidation of naphthalene dihydrodiol into 1,2-dihydroxynaphthalene. This chain is 1,2-dihydroxy-1,2-dihydronaphthalene dehydrogenase, found in Ralstonia sp.